We begin with the raw amino-acid sequence, 209 residues long: uncharacterized protein (209 aa).

Helical transmembrane passes span 21–41, 81–101, 107–127, and 159–179; these read LAYL…VFGL, ILGL…RIAA, VLVN…LYVF, and AAGA…LLFF.

Its subcellular location is the cell membrane. This is an uncharacterized protein from Bacillus subtilis (strain 168).